We begin with the raw amino-acid sequence, 179 residues long: ATP synthase subunit delta (179 aa).

It belongs to the ATPase delta chain family. In terms of assembly, F-type ATPases have 2 components, F(1) - the catalytic core - and F(0) - the membrane proton channel. F(1) has five subunits: alpha(3), beta(3), gamma(1), delta(1), epsilon(1). F(0) has three main subunits: a(1), b(2) and c(10-14). The alpha and beta chains form an alternating ring which encloses part of the gamma chain. F(1) is attached to F(0) by a central stalk formed by the gamma and epsilon chains, while a peripheral stalk is formed by the delta and b chains.

It localises to the cell inner membrane. Its function is as follows. F(1)F(0) ATP synthase produces ATP from ADP in the presence of a proton or sodium gradient. F-type ATPases consist of two structural domains, F(1) containing the extramembraneous catalytic core and F(0) containing the membrane proton channel, linked together by a central stalk and a peripheral stalk. During catalysis, ATP synthesis in the catalytic domain of F(1) is coupled via a rotary mechanism of the central stalk subunits to proton translocation. Functionally, this protein is part of the stalk that links CF(0) to CF(1). It either transmits conformational changes from CF(0) to CF(1) or is implicated in proton conduction. This chain is ATP synthase subunit delta, found in Polaromonas naphthalenivorans (strain CJ2).